A 65-amino-acid chain; its full sequence is GRDAYIAQPENCVYECAKNSYCNDLCTKNGAKSGYCQWLGRWGNACYCIDLPDKVPIRIEGKCHF.

Residues 2-64 (RDAYIAQPEN…VPIRIEGKCH (63 aa)) enclose the LCN-type CS-alpha/beta domain. 4 disulfides stabilise this stretch: cysteine 12–cysteine 63, cysteine 16–cysteine 36, cysteine 22–cysteine 46, and cysteine 26–cysteine 48. Phenylalanine 65 carries the phenylalanine amide modification.

The protein belongs to the long (4 C-C) scorpion toxin superfamily. Sodium channel inhibitor family. Alpha subfamily. As to expression, expressed by the venom gland.

The protein localises to the secreted. Functionally, binds to sodium channels (Nav) and inhibits the inactivation of the activated channels, thereby blocking neuronal transmission. The polypeptide is Neurotoxin Bot2 (Buthus occitanus tunetanus (Common European scorpion)).